A 187-amino-acid polypeptide reads, in one-letter code: Protein canopy-1 (187 aa).

Residues 1–24 (MSPWIKHICLVLVAAFMLVKTTES) form the signal peptide. The region spanning 28–181 (EALYCSACMA…EVSDHCKSSV (154 aa)) is the Saposin B-type domain. 3 cysteine pairs are disulfide-bonded: Cys-32–Cys-177, Cys-35–Cys-170, and Cys-90–Cys-143. The short motif at 184–187 (HSEL) is the Prevents secretion from ER element.

It belongs to the canopy family. As to quaternary structure, homodimer. Interacts with fgfr1.

It is found in the endoplasmic reticulum. Functionally, involved in the maintenance of the midbrain-hindbrain boundary (MHB) organizer. Contributes to a positive-feedback loop of FGF signaling in the MHB, enabling the MHB to exert its role as an organizer for the tectal and cerebellar development. This is Protein canopy-1 (cnpy1) from Danio rerio (Zebrafish).